Here is a 414-residue protein sequence, read N- to C-terminus: MAMPLSLLIGLRFSRGRRRGGMVSLISVISTIGIALGVAVLIVGLSAMNGFERELNNRILAVVPHGEIEAVDQPWTNWQEALDHVQKVPGIAAAAPYINFTGLVESGANLRAIQVKGVNPQQEQRLSALPSFVQGDAWRNFKAGEQQIIIGKGVADALKVKQGDWVSIMIPNSNPEHKLMQPKRVRLHVAGILQLSGQLDHSFAMIPLADAQQYLDMGSSVSGIALKMTDVFNANKLVRDAGEVTNSYVYIKSWIGTYGYMYRDIQMIRAIMYLAMVLVIGVACFNIVSTLVMAVKDKSGDIAVLRTLGAKDGLIRAIFVWYGLLAGLFGSLCGVIIGVVVSLQLTPIIEWIEKLIGHQFLSSDIYFIDFLPSELHWLDVFYVLVTALLLSLLASWYPARRASNIDPARVLSGQ.

4 helical membrane-spanning segments follow: residues 25–45, 275–295, 317–337, and 377–397; these read LISV…IVGL, AMVL…VMAV, AIFV…GVII, and WLDV…ASWY.

This sequence belongs to the ABC-4 integral membrane protein family. LolC/E subfamily.

It localises to the cell inner membrane. Its function is as follows. Part of an ATP-dependent transport system LolCDE responsible for the release of lipoproteins targeted to the outer membrane from the inner membrane. Such a release is dependent of the sorting-signal (absence of an Asp at position 2 of the mature lipoprotein) and of LolA. This is Lipoprotein-releasing system transmembrane protein LolE (lolE) from Escherichia coli (strain K12).